Consider the following 415-residue polypeptide: Multidrug resistance protein MdtA (415 aa).

An N-terminal signal peptide occupies residues 1 to 21; sequence MKGSYKSRWVIVIVVVIAAIA. Disordered stretches follow at residues 32–59 and 392–415; these read SRSAAPGATKQAQQSPAGGRRGMRSGPL and EAQSATTSEEKATSREYAKKGARS. Positions 399–415 are enriched in basic and acidic residues; it reads SEEKATSREYAKKGARS.

Belongs to the membrane fusion protein (MFP) (TC 8.A.1) family. As to quaternary structure, part of a tripartite efflux system composed of MdtA, MdtB and MdtC.

It localises to the cell inner membrane. Its function is as follows. The MdtABC tripartite complex confers resistance against novobiocin and deoxycholate. In Escherichia coli (strain SMS-3-5 / SECEC), this protein is Multidrug resistance protein MdtA.